The following is a 318-amino-acid chain: Receptor homology region, transmembrane domain- and RING domain-containing protein 5 (318 aa).

The N-terminal stretch at 1 to 20 (MNYSWITIMSLLVICKLASA) is a signal peptide. Over 22–163 (VVLIGKNTIL…IPGFGISSWS (142 aa)) the chain is Lumenal. Cysteines 62 and 87 form a disulfide. In terms of domain architecture, PA spans 70–143 (EKRSKYRSSY…RASGEVLKGY (74 aa)). Asn-121 carries an N-linked (GlcNAc...) asparagine glycan. The helical transmembrane segment at 164–184 (IMGITFISLLAMSAILATCFV) threads the bilayer. Residues 185–318 (VRRHQIRQSV…DLPIVVRVYL (134 aa)) lie on the Cytoplasmic side of the membrane. The RING-type; atypical zinc finger occupies 233–275 (CAICIDDYCVGEKLRILPCKHKYHAVCIDSWLGRCRSFCPVCK).

It is found in the prevacuolar compartment membrane. Its subcellular location is the protein storage vacuole membrane. Functionally, involved in the trafficking of vacuolar proteins. May function as a sorting receptor for protein trafficking to the protein storage vacuole (PSV). In Arabidopsis thaliana (Mouse-ear cress), this protein is Receptor homology region, transmembrane domain- and RING domain-containing protein 5 (RMR5).